The following is a 174-amino-acid chain: NADH-ubiquinone oxidoreductase chain 6 (174 aa).

5 helical membrane-spanning segments follow: residues 1 to 21 (MTYV…GFSS), 24 to 44 (SPIY…AIIL), 47 to 67 (GGGY…MVVF), 86 to 106 (VEVL…VLWV), and 151 to 171 (WLVV…IEIA).

The protein belongs to the complex I subunit 6 family. As to quaternary structure, core subunit of respiratory chain NADH dehydrogenase (Complex I) which is composed of 45 different subunits.

The protein localises to the mitochondrion inner membrane. It carries out the reaction a ubiquinone + NADH + 5 H(+)(in) = a ubiquinol + NAD(+) + 4 H(+)(out). Functionally, core subunit of the mitochondrial membrane respiratory chain NADH dehydrogenase (Complex I) which catalyzes electron transfer from NADH through the respiratory chain, using ubiquinone as an electron acceptor. Essential for the catalytic activity and assembly of complex I. The protein is NADH-ubiquinone oxidoreductase chain 6 (MT-ND6) of Gorilla gorilla gorilla (Western lowland gorilla).